Here is a 360-residue protein sequence, read N- to C-terminus: Chorismate synthase (360 aa).

Residue Arg-48 participates in NADP(+) binding. FMN is bound by residues 125–127 (RSS), 242–243 (NA), Gly-286, 301–305 (KPTSS), and Arg-327.

The protein belongs to the chorismate synthase family. In terms of assembly, homotetramer. FMNH2 is required as a cofactor.

The enzyme catalyses 5-O-(1-carboxyvinyl)-3-phosphoshikimate = chorismate + phosphate. The protein operates within metabolic intermediate biosynthesis; chorismate biosynthesis; chorismate from D-erythrose 4-phosphate and phosphoenolpyruvate: step 7/7. Its function is as follows. Catalyzes the anti-1,4-elimination of the C-3 phosphate and the C-6 proR hydrogen from 5-enolpyruvylshikimate-3-phosphate (EPSP) to yield chorismate, which is the branch point compound that serves as the starting substrate for the three terminal pathways of aromatic amino acid biosynthesis. This reaction introduces a second double bond into the aromatic ring system. The chain is Chorismate synthase from Pelagibacter ubique (strain HTCC1062).